A 602-amino-acid polypeptide reads, in one-letter code: Potassium-transporting ATPase potassium-binding subunit (602 aa).

4 consecutive transmembrane segments (helical) span residues 5–25, 65–85, 136–156, and 179–199; these read AMLQ…PLGA, GYAV…YALQ, GLTV…IALI, and LYVL…QGAI. Residues 221 to 248 are disordered; the sequence is QDAKGNPVLGKDGKPVMEDKTSQTQTLP. Residues 231–241 show a composition bias toward basic and acidic residues; that stretch reads KDGKPVMEDKT. Transmembrane regions (helical) follow at residues 283–303, 312–332, 419–439, 458–478, 523–543, and 566–586; these read LANF…CFLF, QGWA…VVET, GLYG…LMVG, AITI…AVSL, IMTG…ILAI, and LFVT…YVPA.

The protein belongs to the KdpA family. As to quaternary structure, the system is composed of three essential subunits: KdpA, KdpB and KdpC.

The protein resides in the cell inner membrane. Part of the high-affinity ATP-driven potassium transport (or Kdp) system, which catalyzes the hydrolysis of ATP coupled with the electrogenic transport of potassium into the cytoplasm. This subunit binds the periplasmic potassium ions and delivers the ions to the membrane domain of KdpB through an intramembrane tunnel. This Chromobacterium violaceum (strain ATCC 12472 / DSM 30191 / JCM 1249 / CCUG 213 / NBRC 12614 / NCIMB 9131 / NCTC 9757 / MK) protein is Potassium-transporting ATPase potassium-binding subunit.